The primary structure comprises 800 residues: Cation/H(+) antiporter 19 (800 aa).

Transmembrane regions (helical) follow at residues 30–50, 60–77, 92–112, 127–147, 158–178, 196–216, 224–244, 278–298, 315–335, 343–363, 375–395, and 408–428; these read FALPLIILQIVLVVVFTRLLA, RVIAEIIGGILLGPSALG, LTVLDTLANIGLLFFLFLVGL, LLIAIAGISLPFIVGVGTSFV, QLPFIVFMGVALSITAFPVLA, MSAAGVNDVAAWILLALAIAL, LVSVWVLLCGTGFVIFAVVAI, FVTDTIGIHALFGAFVVGIVA, LVSGLLLPLYFAASGLKTDVT, WGLLVLVILTTCFGKIVGTVG, AVTLGFLMNTKGLVELIVLNI, and AILVLMALFTTFITTPIVMLI. The tract at residues 776 to 800 is disordered; the sequence is ADTRPLVEEDAEYDQSSRDISDLTA. The segment covering 790–800 has biased composition (basic and acidic residues); that stretch reads QSSRDISDLTA.

It belongs to the monovalent cation:proton antiporter 2 (CPA2) transporter (TC 2.A.37) family. CHX (TC 2.A.37.4) subfamily. Expressed in the whole plant but preferentially in pollen.

Its subcellular location is the membrane. Its function is as follows. May operate as a cation/H(+) antiporter. This is Cation/H(+) antiporter 19 (CHX19) from Arabidopsis thaliana (Mouse-ear cress).